Consider the following 216-residue polypeptide: MKVFIDSGDIAEIKEAQSMGVVDGVTTNPSLLAKAGKPTKRAIAEICEVVDGPVSAEVVAVEKDAILREGRELAKIHRNVVVKVPLIDEGLKAARIFASEGIKTNVTLCFSAAQALLAAKAGATYVSPFVGRVDDAAGDGMDLVLQVVTIFRNYGFSTQVLTASIRHPVHFVQAAMIGSHAATMPLKVIKQLTRHPLTDVGLAQFLADAKKIPELV.

Lys83 serves as the catalytic Schiff-base intermediate with substrate.

It belongs to the transaldolase family. Type 3B subfamily.

Its subcellular location is the cytoplasm. The enzyme catalyses D-sedoheptulose 7-phosphate + D-glyceraldehyde 3-phosphate = D-erythrose 4-phosphate + beta-D-fructose 6-phosphate. It functions in the pathway carbohydrate degradation; pentose phosphate pathway; D-glyceraldehyde 3-phosphate and beta-D-fructose 6-phosphate from D-ribose 5-phosphate and D-xylulose 5-phosphate (non-oxidative stage): step 2/3. Transaldolase is important for the balance of metabolites in the pentose-phosphate pathway. This chain is Probable transaldolase, found in Sorangium cellulosum (strain So ce56) (Polyangium cellulosum (strain So ce56)).